The following is a 288-amino-acid chain: 5,10-methylenetetrahydrofolate reductase (288 aa).

FAD-binding residues include alanine 51, histidine 73, glycine 106, aspartate 107, alanine 118, tyrosine 140, histidine 144, and lysine 159. Aspartate 107 lines the (6S)-5-methyl-5,6,7,8-tetrahydrofolate pocket. Residue glutamine 175 participates in (6S)-5-methyl-5,6,7,8-tetrahydrofolate binding. An NADH-binding site is contributed by glutamine 175.

Belongs to the methylenetetrahydrofolate reductase family. Requires FAD as cofactor.

The catalysed reaction is (6S)-5-methyl-5,6,7,8-tetrahydrofolate + NAD(+) = (6R)-5,10-methylene-5,6,7,8-tetrahydrofolate + NADH + H(+). Its pathway is one-carbon metabolism; tetrahydrofolate interconversion. It participates in amino-acid biosynthesis; L-methionine biosynthesis via de novo pathway. In terms of biological role, catalyzes the NADH-dependent reduction of 5,10-methylenetetrahydrofolate to 5-methyltetrahydrofolate. Is required to provide the methyl group necessary for methionine synthetase to convert homocysteine to methionine; the methyl group is given by 5-methyltetrahydrofolate. Is required for Sphingobium SYK-6 to grow on vanillate or syringate as the sole source of carbon. The chain is 5,10-methylenetetrahydrofolate reductase from Sphingobium sp. (strain NBRC 103272 / SYK-6).